A 502-amino-acid chain; its full sequence is MSELRDTRLEKCQALSDLGQGPYALNFEPTHRMAALHEAHADLPNGEEREVTVSVAGRVMTRRVMGKLAFFTLADETGTIQLFLEKAGLEAQQEGWFKQITGLVDGGDWLGVSGTLRRTDRGELSVKVSDWRMLTKALQPLPDKWHGLADVEKRYRQRYLDLIVSPDSRETFRRRARLVSGIRRWLDQRDFLEIETPVLQSEPGGADARPFETHHNALDLPLTLRIATELHLKRLVVGGFERVYELGRIFRNEGVSTRHNPEFTSVEIYQAYSDYIGMMELTEQMVSAVCQEVCGSCQITYQDTEIDLSPPWRRATMHELVEEATGLDFNSFSSREAAAVAMTGKGLHAPELADSVGRLLNEAFEQAVETTLIQPTFVTDYPVEISPLARPHRSKPGLVERFELFIVGREHANAFSELTDPVDQRQRLEAQQARKAAGDLEAQGLDEDFVTALEVGMPPTGGLGIGIDRLVMLLTDSPSIRDVIAFPLLRPEPRAADAPAMG.

Residues glutamate 403 and glutamate 410 each contribute to the Mg(2+) site.

This sequence belongs to the class-II aminoacyl-tRNA synthetase family. In terms of assembly, homodimer. Mg(2+) is required as a cofactor.

It is found in the cytoplasm. It catalyses the reaction tRNA(Lys) + L-lysine + ATP = L-lysyl-tRNA(Lys) + AMP + diphosphate. This chain is Lysine--tRNA ligase, found in Parasynechococcus marenigrum (strain WH8102).